The primary structure comprises 427 residues: Glutamate-1-semialdehyde 2,1-aminomutase (427 aa).

Residue Lys265 is modified to N6-(pyridoxal phosphate)lysine.

Belongs to the class-III pyridoxal-phosphate-dependent aminotransferase family. HemL subfamily. As to quaternary structure, homodimer. Pyridoxal 5'-phosphate is required as a cofactor.

The protein resides in the cytoplasm. The catalysed reaction is (S)-4-amino-5-oxopentanoate = 5-aminolevulinate. It functions in the pathway porphyrin-containing compound metabolism; protoporphyrin-IX biosynthesis; 5-aminolevulinate from L-glutamyl-tRNA(Glu): step 2/2. The protein is Glutamate-1-semialdehyde 2,1-aminomutase of Burkholderia multivorans (strain ATCC 17616 / 249).